Here is a 202-residue protein sequence, read N- to C-terminus: Hypoxanthine-guanine phosphoribosyltransferase (202 aa).

Diphosphate-binding residues include Lys-66 and Gly-67. Residues Glu-122 and Asp-123 each contribute to the Mg(2+) site. Asp-126 functions as the Proton acceptor in the catalytic mechanism. GMP is bound by residues Lys-154, Phe-175–Val-176, and Asp-182. Arg-188 contributes to the diphosphate binding site.

The protein belongs to the purine/pyrimidine phosphoribosyltransferase family. Mg(2+) is required as a cofactor.

Its subcellular location is the cytoplasm. It catalyses the reaction IMP + diphosphate = hypoxanthine + 5-phospho-alpha-D-ribose 1-diphosphate. The catalysed reaction is GMP + diphosphate = guanine + 5-phospho-alpha-D-ribose 1-diphosphate. The protein operates within purine metabolism; IMP biosynthesis via salvage pathway; IMP from hypoxanthine: step 1/1. Its pathway is purine metabolism; GMP biosynthesis via salvage pathway; GMP from guanine: step 1/1. Functionally, purine salvage pathway enzyme that catalyzes the transfer of the ribosyl-5-phosphate group from 5-phospho-alpha-D-ribose 1-diphosphate (PRPP) to the N9 position of the 6-oxopurines hypoxanthine and guanine to form the corresponding ribonucleotides IMP (inosine 5'-monophosphate) and GMP (guanosine 5'-monophosphate), with the release of PPi. This Mycobacterium tuberculosis (strain CDC 1551 / Oshkosh) protein is Hypoxanthine-guanine phosphoribosyltransferase (hpt).